Reading from the N-terminus, the 344-residue chain is MSILIDNVSKNFGDFQAVADIRLEIQPGNLVALLGPSGCGKSTLLRLIAGLELPDSGQIWLEGQDATRQRLQERNIGFVFQHYALFKHLTVAQNIAFGLEVRKTPKAQIKARVEELLELVQLAGYGGRYPAQLSGGQRQRVALARALAVEPRVLLLDEPFGALDARVRKDLRAWLRRLHDEVHVTTIFVTHDPEEALEVSDTIVVMNKGRVEQVGSPVEIYDHPESAFVMSFLGQVNTLPNSPELFPQLSEAVREVLVRPHDLSLSVQAGGPALAARVERLMYLGWQVQAELVLEAGQPLIVQLSREQADRLQLRPDQPVYVQVRNPKIFPAVAADKQLAEAAA.

The region spanning 3 to 233 (ILIDNVSKNF…PESAFVMSFL (231 aa)) is the ABC transporter domain. 35 to 42 (GPSGCGKS) contributes to the ATP binding site.

It belongs to the ABC transporter superfamily. Sulfate/tungstate importer (TC 3.A.1.6) family. The complex is composed of two ATP-binding proteins (CysA), two transmembrane proteins (CysT and CysW) and a solute-binding protein (CysP).

The protein resides in the cell inner membrane. It catalyses the reaction sulfate(out) + ATP + H2O = sulfate(in) + ADP + phosphate + H(+). The enzyme catalyses thiosulfate(out) + ATP + H2O = thiosulfate(in) + ADP + phosphate + H(+). In terms of biological role, part of the ABC transporter complex CysAWTP involved in sulfate/thiosulfate import. Responsible for energy coupling to the transport system. This is Sulfate/thiosulfate import ATP-binding protein CysA from Gloeobacter violaceus (strain ATCC 29082 / PCC 7421).